Consider the following 504-residue polypeptide: Plasma protease C1 inhibitor (504 aa).

An N-terminal signal peptide occupies residues 1-22 (MASRLTPLTLLLLLLAGDRAFS). The tract at residues 22 to 67 (SDPEATSHSTQDPLEAQAKSRESFPERDDSWSPPEPTVLPSTWPTT) is disordered. Residues 39–51 (AKSRESFPERDDS) show a composition bias toward basic and acidic residues. 3 N-linked (GlcNAc...) asparagine glycosylation sites follow: asparagine 75, asparagine 83, and asparagine 107. The span at 85-124 (SFSQHSQPAAQLPTDSPGQPPLNSSSQPSTASDLPTQATT) shows a compositional bias: polar residues. Residues 85–141 (SFSQHSQPAAQLPTDSPGQPPLNSSSQPSTASDLPTQATTEPFCPEPLAQCSDSDRD) form a disordered region. Intrachain disulfides connect cysteine 128–cysteine 432 and cysteine 135–cysteine 210. 2 N-linked (GlcNAc...) asparagine glycosylation sites follow: asparagine 243 and asparagine 356.

It belongs to the serpin family. Interacts with MASP1.

The protein localises to the secreted. In terms of biological role, serine protease inhibitor, which acrs as a regulator of the classical complement pathway. Forms a proteolytically inactive stoichiometric complex with the C1r or C1s proteases. May also regulate blood coagulation, fibrinolysis and the generation of kinins. Very efficient inhibitor of FXIIa. Inhibits chymotrypsin and kallikrein. The protein is Plasma protease C1 inhibitor (Serping1) of Mus musculus (Mouse).